A 118-amino-acid chain; its full sequence is MSRVKRGVTAHARHRKIIKKAKGYYGRRKNAFRTANQAVEKAGQYAYRDRRTRKRNFRALWIQRINAGVREHGLTYSRFIDGLAKAGIEVDRKVLSDIAIHEPEAFKALVEQAQAALK.

It belongs to the bacterial ribosomal protein bL20 family.

In terms of biological role, binds directly to 23S ribosomal RNA and is necessary for the in vitro assembly process of the 50S ribosomal subunit. It is not involved in the protein synthesizing functions of that subunit. The sequence is that of Large ribosomal subunit protein bL20 from Parvibaculum lavamentivorans (strain DS-1 / DSM 13023 / NCIMB 13966).